Reading from the N-terminus, the 92-residue chain is N(2)-fixation sustaining protein CowN (92 aa).

This sequence belongs to the CowN family.

Is required to sustain N(2)-dependent growth in the presence of low levels of carbon monoxide (CO). Probably acts by protecting the N(2) fixation ability of the nitrogenase complex, which is inactivated in the presence of CO. The polypeptide is N(2)-fixation sustaining protein CowN (Cereibacter sphaeroides (strain KD131 / KCTC 12085) (Rhodobacter sphaeroides)).